Consider the following 211-residue polypeptide: Protein GrpE (211 aa).

Positions 1–10 (MTDDTKKPGP) are enriched in basic and acidic residues. 2 disordered regions span residues 1 to 37 (MTDDTKKPGPDADVAEEFVDPAQAGEEQAETAEPDPV) and 187 to 211 (AKGGPKAEPSASAEPGTSSLNEKDA). The span at 27 to 36 (EQAETAEPDP) shows a compositional bias: acidic residues. A compositionally biased stretch (polar residues) spans 201 to 211 (PGTSSLNEKDA).

This sequence belongs to the GrpE family. As to quaternary structure, homodimer.

The protein localises to the cytoplasm. In terms of biological role, participates actively in the response to hyperosmotic and heat shock by preventing the aggregation of stress-denatured proteins, in association with DnaK and GrpE. It is the nucleotide exchange factor for DnaK and may function as a thermosensor. Unfolded proteins bind initially to DnaJ; upon interaction with the DnaJ-bound protein, DnaK hydrolyzes its bound ATP, resulting in the formation of a stable complex. GrpE releases ADP from DnaK; ATP binding to DnaK triggers the release of the substrate protein, thus completing the reaction cycle. Several rounds of ATP-dependent interactions between DnaJ, DnaK and GrpE are required for fully efficient folding. The sequence is that of Protein GrpE from Agrobacterium fabrum (strain C58 / ATCC 33970) (Agrobacterium tumefaciens (strain C58)).